A 335-amino-acid chain; its full sequence is Ubiquinone biosynthesis protein COQ4, mitochondrial (335 aa).

A mitochondrion-targeting transit peptide spans 1–10 (MLRLSLLRST). Zn(2+) contacts are provided by H210, D211, H214, and E226.

The protein belongs to the COQ4 family. In terms of assembly, component of a multi-subunit COQ enzyme complex, composed of at least COQ3, COQ4, COQ5, COQ6, COQ7 and COQ9. Interacts with COQ3. It depends on Zn(2+) as a cofactor.

The protein localises to the mitochondrion inner membrane. The enzyme catalyses 4-hydroxy-3-methoxy-5-(all-trans-hexaprenyl)benzoate + H(+) = 2-methoxy-6-(all-trans-hexaprenyl)phenol + CO2. The protein operates within cofactor biosynthesis; ubiquinone biosynthesis. Lyase that catalyzes the C1-decarboxylation of 4-hydroxy-3-methoxy-5-(all-trans-hexaprenyl)benzoic acid into 2-methoxy-6-(all-trans-hexaprenyl)phenol during ubiquinone biosynthesis. This Saccharomyces cerevisiae (strain YJM789) (Baker's yeast) protein is Ubiquinone biosynthesis protein COQ4, mitochondrial.